A 207-amino-acid polypeptide reads, in one-letter code: Holliday junction resolvase RecU (207 aa).

The disordered stretch occupies residues 1 to 30 (MPIRYPNGQPYSRSPKQGQAKKPLPADTYS). Positions 87, 89, 102, and 121 each coordinate Mg(2+).

The protein belongs to the RecU family. It depends on Mg(2+) as a cofactor.

The protein localises to the cytoplasm. It catalyses the reaction Endonucleolytic cleavage at a junction such as a reciprocal single-stranded crossover between two homologous DNA duplexes (Holliday junction).. Its function is as follows. Endonuclease that resolves Holliday junction intermediates in genetic recombination. Cleaves mobile four-strand junctions by introducing symmetrical nicks in paired strands. Promotes annealing of linear ssDNA with homologous dsDNA. Required for DNA repair, homologous recombination and chromosome segregation. This is Holliday junction resolvase RecU from Shouchella clausii (strain KSM-K16) (Alkalihalobacillus clausii).